A 346-amino-acid chain; its full sequence is UPF0283 membrane protein VP1870 (346 aa).

The disordered stretch occupies residues 1–30 (MSELKQKQIFSEKALEKEQQSDSPELTAQK). The span at 21–30 (SDSPELTAQK) shows a compositional bias: polar residues. Helical transmembrane passes span 73–93 (VFAT…VTAV) and 98–118 (WLAL…LGAI).

This sequence belongs to the UPF0283 family.

Its subcellular location is the cell inner membrane. The chain is UPF0283 membrane protein VP1870 from Vibrio parahaemolyticus serotype O3:K6 (strain RIMD 2210633).